Here is a 140-residue protein sequence, read N- to C-terminus: Sex-regulated protein janus-B (140 aa).

R42 is a substrate binding site. H69 functions as the Proton acceptor in the catalytic mechanism. Substrate is bound at residue 110-112; the sequence is SRT.

It belongs to the janus family.

Functionally, janA and janB regulate somatic sex differentiation. In Drosophila sechellia (Fruit fly), this protein is Sex-regulated protein janus-B (janB).